A 68-amino-acid chain; its full sequence is Large ribosomal subunit protein uL29 (68 aa).

Belongs to the universal ribosomal protein uL29 family.

This is Large ribosomal subunit protein uL29 from Prochlorococcus marinus (strain SARG / CCMP1375 / SS120).